Reading from the N-terminus, the 172-residue chain is NADH-quinone oxidoreductase subunit B (172 aa).

Residues cysteine 46, cysteine 47, cysteine 111, and cysteine 141 each contribute to the [4Fe-4S] cluster site.

The protein belongs to the complex I 20 kDa subunit family. NDH-1 is composed of 14 different subunits. Subunits NuoB, C, D, E, F, and G constitute the peripheral sector of the complex. Requires [4Fe-4S] cluster as cofactor.

The protein localises to the cell membrane. The catalysed reaction is a quinone + NADH + 5 H(+)(in) = a quinol + NAD(+) + 4 H(+)(out). Its function is as follows. NDH-1 shuttles electrons from NADH, via FMN and iron-sulfur (Fe-S) centers, to quinones in the respiratory chain. The immediate electron acceptor for the enzyme in this species is believed to be a menaquinone. Couples the redox reaction to proton translocation (for every two electrons transferred, four hydrogen ions are translocated across the cytoplasmic membrane), and thus conserves the redox energy in a proton gradient. The chain is NADH-quinone oxidoreductase subunit B from Bacillus mycoides (strain KBAB4) (Bacillus weihenstephanensis).